The sequence spans 127 residues: Large ribosomal subunit protein uL22c (127 aa).

The protein belongs to the universal ribosomal protein uL22 family. Part of the 50S ribosomal subunit.

The protein resides in the plastid. It is found in the chloroplast. This protein binds specifically to 23S rRNA. Its function is as follows. The globular domain of the protein is located near the polypeptide exit tunnel on the outside of the subunit, while an extended beta-hairpin is found that lines the wall of the exit tunnel in the center of the 70S ribosome. The polypeptide is Large ribosomal subunit protein uL22c (rpl22) (Acorus calamus var. americanus (American sweet flag)).